Consider the following 487-residue polypeptide: Zinc finger and BTB domain-containing protein 32 (487 aa).

One can recognise a BTB domain in the interval 29–87 (CDTLITVGGQEFPAHSLVLAGVSQQLGRRGQWALGEGISPSTFAQLLNFVYGESVELQP). The span at 113 to 166 (RGDRAKKPDPGLKKHQEEPEKPSRNAERELGDPGEKQKPEQVSRTGGREQEMLH) shows a compositional bias: basic and acidic residues. Disordered regions lie at residues 113-208 (RGDR…ADGK) and 308-371 (QNQL…ARSR). Over residues 308-320 (QNQLASSSPTPGS) the composition is skewed to polar residues. Residues 357 to 369 (PPRPHPPPAPPAR) show a composition bias toward pro residues. C2H2-type zinc fingers lie at residues 373 to 395 (YACSVCGKRFSLKHQMETHYRVH), 401 to 423 (FSCSLCPQRSRDFSAMTKHLRTH), and 428 to 450 (YRXXLCGAGCPSLASMQAHMRGH). The interval 468 to 487 (SSSRPSRPSTSPCCPSSSTT) is disordered.

This sequence belongs to the krueppel C2H2-type zinc-finger protein family. As to quaternary structure, homodimer (via PTB domain). Interacts with the N-terminal of FANCC. Interacts with ZBTB16. Interacts with GATA3.

The protein localises to the nucleus. In terms of biological role, DNA-binding protein that binds to the to a 5'-TGTACAGTGT-3' core sequence. May function as a transcriptional transactivator and transcriptional repressor. Probably exerts its repressor effect by preventing GATA3 from binding to DNA. May play a role in regulating the differentiation and activation of helper T-cells. The sequence is that of Zinc finger and BTB domain-containing protein 32 (ZBTB32) from Pan troglodytes (Chimpanzee).